The sequence spans 157 residues: Nicotinate dehydrogenase small FeS subunit (157 aa).

The 2Fe-2S ferredoxin-type domain maps to isoleucine 4–valine 80. [2Fe-2S] cluster is bound by residues cysteine 42, cysteine 47, cysteine 50, cysteine 62, cysteine 101, cysteine 104, cysteine 136, and cysteine 138.

In terms of assembly, heterooctamer of NDHM, NDHL, NDHS and NDHF. Dimer of heterotetramers. Requires [2Fe-2S] cluster as cofactor.

The catalysed reaction is nicotinate + NADP(+) + H2O = 6-hydroxynicotinate + NADPH + H(+). It participates in cofactor degradation; nicotinate degradation; 6-hydroxynicotinate from nicotinate: step 1/1. With respect to regulation, reversibly inactivated by selenide and sulfide. Not inhibited by cyanide. Functionally, catalyzes the hydroxylation of nicotinate to 6-hydroxynicotinate. Also active against 2-pyrazinecarboxylic acid, but inactive against other nicotinate analogs. This chain is Nicotinate dehydrogenase small FeS subunit (ndhS), found in Eubacterium barkeri (Clostridium barkeri).